The sequence spans 217 residues: Lipid A acyltransferase PagP (217 aa).

Positions 1–24 (MYLKRILITLSLITLPIVPCLSYA) are cleaved as a signal peptide. Catalysis depends on residues His-89, Asp-132, and Ser-133.

Belongs to the lipid A palmitoyltransferase family. As to quaternary structure, homodimer.

The protein resides in the cell outer membrane. It catalyses the reaction a lipid A + a 1,2-diacyl-sn-glycero-3-phosphocholine = a hepta-acyl lipid A + a 2-acyl-sn-glycero-3-phosphocholine. The catalysed reaction is a lipid IVA + a 1,2-diacyl-sn-glycero-3-phosphocholine = a lipid IVB + a 2-acyl-sn-glycero-3-phosphocholine. It carries out the reaction a lipid IIA + a 1,2-diacyl-sn-glycero-3-phosphocholine = a lipid IIB + a 2-acyl-sn-glycero-3-phosphocholine. Its function is as follows. Transfers a fatty acid residue from the sn-1 position of a phospholipid to the N-linked hydroxyfatty acid chain on the proximal unit of lipid A or its precursors. This chain is Lipid A acyltransferase PagP, found in Pectobacterium atrosepticum (strain SCRI 1043 / ATCC BAA-672) (Erwinia carotovora subsp. atroseptica).